The primary structure comprises 114 residues: Putative movement protein (114 aa).

Residues 27 to 47 (LIGIILLVTVCLIVLWVCIML) traverse the membrane as a helical segment. Residues 79–114 (RTPFEATGPERERNWDARRQSTTVNPASQPNTGSVF) form a disordered region. A compositionally biased stretch (basic and acidic residues) spans 86–97 (GPERERNWDARR). The segment covering 98–114 (QSTTVNPASQPNTGSVF) has biased composition (polar residues).

Belongs to the nanovirus movement protein family.

It localises to the host cell membrane. Its function is as follows. May transport viral genome to neighboring plant cells directly through plasmosdesmata, without any budding. The movement protein allows efficient cell to cell propagation, by bypassing the host cell wall barrier. This is Putative movement protein (DNA-M) from Faba bean necrotic yellows virus (isolate Syrian SV292-88) (FBNYV).